The primary structure comprises 321 residues: MAAAEAPRLAGMVVALQANFLEVELETFNPSSLVSWTGSTDDEPLRLLCTRRTRLDHRGAAVHVGDRVWVEAIDWQERRAVVGDVEPRQSWINRPPVANVTAVVVALAVKQPCFDADQASRFLLSAEQTGVDVHLILTKRDLITSDQLEQQLVRLRGWGYRPMAVSVQTGEGLGALKNKLSSTRLAVFCGPSGVGKTSLLNQLLPQLSLRVGAVSGRLKRGRHTTRHVELFRLCEGSLVADTPGFNRPELPADLRKLAVLFPELDGQLEDYPCRFRDCFHRDEPGCGVDKSWERYPIYKRFLEEMECLTRSSRGGSGSGLL.

One can recognise a CP-type G domain in the interval 89–248; sequence QSWINRPPVA…VADTPGFNRP (160 aa). GTP contacts are provided by residues 138–141 and 190–198; these read TKRD and GPSGVGKTS. Zn(2+) contacts are provided by cysteine 273, cysteine 278, histidine 280, and cysteine 286.

The protein belongs to the TRAFAC class YlqF/YawG GTPase family. RsgA subfamily. Monomer. Associates with 30S ribosomal subunit, binds 16S rRNA. Requires Zn(2+) as cofactor.

It localises to the cytoplasm. Its function is as follows. One of several proteins that assist in the late maturation steps of the functional core of the 30S ribosomal subunit. Helps release RbfA from mature subunits. May play a role in the assembly of ribosomal proteins into the subunit. Circularly permuted GTPase that catalyzes slow GTP hydrolysis, GTPase activity is stimulated by the 30S ribosomal subunit. This chain is Small ribosomal subunit biogenesis GTPase RsgA, found in Prochlorococcus marinus (strain MIT 9313).